We begin with the raw amino-acid sequence, 252 residues long: Mitochondrial intermembrane space import and assembly protein 40 (252 aa).

Residues 1–31 (MYRTISRSSSGLIRQSTARLTRQLSTTRTTP) constitute a mitochondrion transit peptide. Residues 32 to 37 (SQYNSK) are Mitochondrial matrix-facing. The helical; Signal-anchor for type II membrane protein transmembrane segment at 38 to 54 (LLLGVLGTGALAFGYFS) threads the bilayer. Topologically, residues 55-252 (QQSSLIQNAS…DKVKPNTKSD (198 aa)) are mitochondrial intermembrane. Over residues 90–123 (RQEKVIKENEQKTKKAEDAKTSSESKANVADKKS) the composition is skewed to basic and acidic residues. Residues 90–143 (RQEKVIKENEQKTKKAEDAKTSSESKANVADKKSNSQPEGEPEGEGKQEAAFNP) are disordered. 3 cysteine pairs are disulfide-bonded: C152–C154, C163–C196, and C173–C186. The 45-residue stretch at 160–204 (HGPCGEEFKEAFSCFVFSETEPKGIDCIKKFENMRSCFKRYPEHY) folds into the CHCH domain. Short sequence motifs (cx9C motif) lie at residues 163-173 (CGEEFKEAFSC) and 186-196 (CIKKFENMRSC). Residues 230 to 252 (EPAIEQIEQGIKEDKVKPNTKSD) are disordered. The segment covering 239–252 (GIKEDKVKPNTKSD) has biased composition (basic and acidic residues).

In terms of assembly, monomer. Cu(2+) is required as a cofactor. The cofactor is Zn(2+).

The protein localises to the mitochondrion inner membrane. Its function is as follows. Required for the import and folding of small cysteine-containing proteins (small Tim) in the mitochondrial intermembrane space (IMS). Forms a redox cycle with ERV1 that involves a disulfide relay system. Precursor proteins to be imported into the IMS are translocated in their reduced form into the mitochondria. The oxidized form of MIA40 forms a transient intermolecular disulfide bridge with the reduced precursor protein, resulting in oxidation of the precursor protein that now contains an intramolecular disulfide bond and is able to undergo folding in the IMS. The polypeptide is Mitochondrial intermembrane space import and assembly protein 40 (MIA40) (Candida albicans (strain SC5314 / ATCC MYA-2876) (Yeast)).